Reading from the N-terminus, the 3165-residue chain is ORFB polyprotein (3165 aa).

Residues 271 to 418 (MARSIGLSHE…LENEPDILVG (148 aa)) form the Peptidase C8 domain. Active-site for papain-like protease p48 activity residues include C341 and H388. Residues 453-472 (AEPGQRAKDNTNPSTPRPIE) form a disordered region. The next 6 membrane-spanning stretches (helical) occupy residues 791-811 (IMIA…YVPY), 823-843 (YILL…GYAC), 1166-1186 (AGLF…AAIM), 1193-1213 (KYLV…KALW), 1215-1235 (FPIF…VSVY), and 1356-1376 (ALGF…LRPP). The RNA-directed RNA polymerase stretch occupies residues 1793–2208 (FYKSRKALKQ…AEDSADYRAW (416 aa)). 3 helical membrane passes run 2495 to 2515 (VRIY…MHWV), 2517 to 2537 (LFIQ…WSFW), and 2590 to 2610 (LGIV…EVLF). The Helicase ATP-binding domain maps to 2651 to 2796 (ATKAIEHGHV…IPFLEPTLPK (146 aa)). ATP is bound at residue 2664–2671 (AKTASGKS). A DEFH box motif is present at residues 2751–2754 (DEFH).

The protein in the C-terminal section; belongs to the DEAD box helicase family. Papain-like protease p48 is autocatalytically processed. The putative RNA-directed RNA polymerase/helicase may be further processed.

The protein localises to the host membrane. It carries out the reaction RNA(n) + a ribonucleoside 5'-triphosphate = RNA(n+1) + diphosphate. The enzyme catalyses ATP + H2O = ADP + phosphate + H(+). Its function is as follows. Papain-like protease p48 is a cysteine protease of the peptidase family C8. The polypeptide is ORFB polyprotein (Cryphonectria hypovirus 1 (strain EP713) (CHV-1/EP713)).